A 295-amino-acid chain; its full sequence is Aquaporin-9 (295 aa).

Over 1–24 (MQPEGAEKGKSFKQRLVLKSSLAK) the chain is Cytoplasmic. The helical transmembrane segment at 25 to 43 (ETLSEFLGTFILIVLGCGC) threads the bilayer. Topologically, residues 44–57 (VAQAILSRGRFGGV) are extracellular. Residues 58 to 77 (ITINVGFSMAVAMAIYVAGG) traverse the membrane as a helical segment. Residues 78 to 79 (VS) lie on the Cytoplasmic side of the membrane. Positions 80–92 (GGHINPAVSLAMC) form an intramembrane region, discontinuously helical. Positions 84–86 (NPA) match the NPA 1 motif. Residues 93-98 (LFGRMK) are Cytoplasmic-facing. A helical transmembrane segment spans residues 99-123 (WFKLPFYVGAQFLGAFVGAATVFGI). Over 124 to 160 (YYDGLMSFAGGKLLIVGENATAHIFATYPAPYLSLAN) the chain is Extracellular. A helical membrane pass occupies residues 161 to 178 (AFADQVVATMILLIIVFA). The Cytoplasmic segment spans residues 179-190 (IFDSRNLGAPRG). Residues 191–207 (LEPIAIGLLIIVIASSL) traverse the membrane as a helical segment. Topologically, residues 208-210 (GLN) are extracellular. Positions 211–225 (SGCAMNPARDLSPRL) form an intramembrane region, discontinuously helical. The NPA 2 signature appears at 216–218 (NPA). Topologically, residues 226 to 243 (FTALAGWGFEVFRAGNNF) are extracellular. A helical transmembrane segment spans residues 244 to 264 (WWIPVVGPLVGAVIGGLIYVL). Topologically, residues 265–295 (VIEIHHPEPDSVFKTEQSEDKPEKYELSVIM) are cytoplasmic.

The protein belongs to the MIP/aquaporin (TC 1.A.8) family. Homotetramer; each monomer provides an independent glycerol/water pore. In terms of tissue distribution, highly expressed in peripheral leukocytes. Also expressed in liver, lung, and spleen.

It is found in the cell membrane. The protein resides in the basolateral cell membrane. The catalysed reaction is glycerol(in) = glycerol(out). The enzyme catalyses H2O(in) = H2O(out). It catalyses the reaction urea(in) = urea(out). It carries out the reaction (S)-lactate(in) = (S)-lactate(out). The catalysed reaction is NH4(+)(in) = NH4(+)(out). The enzyme catalyses uracil(in) = uracil(out). It catalyses the reaction adenine(out) = adenine(in). It carries out the reaction 3-hydroxybutanoate(in) = 3-hydroxybutanoate(out). The catalysed reaction is D-sorbitol(in) = D-sorbitol(out). The enzyme catalyses D-mannitol(in) = D-mannitol(out). It catalyses the reaction H2O2(out) = H2O2(in). It carries out the reaction arsenite(in) = arsenite(out). The catalysed reaction is selenite(in) = selenite(out). In terms of biological role, aquaglyceroporins form homotetrameric transmembrane channels, with each monomer independently mediating glycerol and water transport across the plasma membrane along their osmotic gradient. AQP9 is the primary route for glycerol uptake in hepatocytes, supporting hepatic gluconeogenesis. It exhibits broad specificity and may transport various small, non-charged solutes, including carbamides, polyols, purines, and pyrimidines. AQP9 may also facilitate hepatic urea extrusion. Due to its permeability to lactate, AQP9 might participate in the astrocyte-to-neuron lactate shuttle, supplying neurons with energy. Additionally, AQP9 is permeable to arsenite, contributing to arsenic excretion by the liver and providing partial protection against arsenic toxicity. It is also permeable to H2O2 in vivo. Could also be permeable to ammonium. This is Aquaporin-9 from Homo sapiens (Human).